Here is a 207-residue protein sequence, read N- to C-terminus: Thiamine-phosphate synthase (207 aa).

4-amino-2-methyl-5-(diphosphooxymethyl)pyrimidine-binding positions include Q36–K40 and N68. Positions 69 and 88 each coordinate Mg(2+). Residue T107 participates in 4-amino-2-methyl-5-(diphosphooxymethyl)pyrimidine binding. T134–T136 is a 2-[(2R,5Z)-2-carboxy-4-methylthiazol-5(2H)-ylidene]ethyl phosphate binding site. Position 137 (K137) interacts with 4-amino-2-methyl-5-(diphosphooxymethyl)pyrimidine. G164 serves as a coordination point for 2-[(2R,5Z)-2-carboxy-4-methylthiazol-5(2H)-ylidene]ethyl phosphate.

Belongs to the thiamine-phosphate synthase family. Mg(2+) serves as cofactor.

The enzyme catalyses 2-[(2R,5Z)-2-carboxy-4-methylthiazol-5(2H)-ylidene]ethyl phosphate + 4-amino-2-methyl-5-(diphosphooxymethyl)pyrimidine + 2 H(+) = thiamine phosphate + CO2 + diphosphate. The catalysed reaction is 2-(2-carboxy-4-methylthiazol-5-yl)ethyl phosphate + 4-amino-2-methyl-5-(diphosphooxymethyl)pyrimidine + 2 H(+) = thiamine phosphate + CO2 + diphosphate. It catalyses the reaction 4-methyl-5-(2-phosphooxyethyl)-thiazole + 4-amino-2-methyl-5-(diphosphooxymethyl)pyrimidine + H(+) = thiamine phosphate + diphosphate. It participates in cofactor biosynthesis; thiamine diphosphate biosynthesis; thiamine phosphate from 4-amino-2-methyl-5-diphosphomethylpyrimidine and 4-methyl-5-(2-phosphoethyl)-thiazole: step 1/1. Condenses 4-methyl-5-(beta-hydroxyethyl)thiazole monophosphate (THZ-P) and 2-methyl-4-amino-5-hydroxymethyl pyrimidine pyrophosphate (HMP-PP) to form thiamine monophosphate (TMP). This is Thiamine-phosphate synthase from Rhodospirillum centenum (strain ATCC 51521 / SW).